The chain runs to 716 residues: MNYDYLTDEQKQQLYFHQMQAEQQQHQQQLHYKQQQHIQQQQQHQQNQQNQQQQPQPPRQPFSTFLQNNGSNSDLPQMGTFQQDLQRQNIPNLRFSQQNQPSDLGQEFQDDDSFMDEDLTEIHEQPPMQELNSSPMTHPHSFQQNFQTPTKNDDANLRNQQFQSVDSERSLDFKPPVTFTKLNNNSNADLSSPTESSFLKSNLNLPNSNIPPAGASNDPNAQKSNYIYFNRQPNSLNKIAQDKASSIKLKLENYYQMSVAHAIERNQRRLDLEHKLLNEESGSSEERKNRQLQNLGKKESQFLRLRRTKLSLEDFNTVKVIGKGAFGEVRLVQKRDTGKIYAMKTLLKSEMYKKDQLAHVKAERDVLAGSDSPWVVSLYYSFQDAQYLYLIMEFLPGGDLMTMLIRWQIFTEDITRFYMAECVLAIEAIHKLGFIHRDIKPDNILIDIRGHIKLSDFGLSTGFHKTHDSNYYKKLLEKENPHHTNPQNGNLQAPSMATNNRNSMMVDAIHLTMSNRQQMQTWRKSRRLMAYSTVGTPDYIAPEIFVHQGYGQECDWWSLGAIMFECLIGWPPFCSETPHETYRKILNWQETLQIPDDIHLSPESEDLIRKLLTNAENRLGRYNGADELKSHPFFRGVDWDTIRKVDAPFIPKLRSITDTRFFPTDELENVPDSPALSKAMEQRDQVLQNGGNVKEDLPFIGYTYSRFDYLTRKNAL.

Residues 22–54 are compositionally biased toward low complexity; it reads EQQQHQQQLHYKQQQHIQQQQQHQQNQQNQQQQ. Disordered regions lie at residues 22–78, 128–154, and 176–223; these read EQQQ…LPQM, MQELNSSPMTHPHSFQQNFQTPTKNDD, and PVTF…NAQK. Polar residues-rich tracts occupy residues 62-78, 130-150, and 180-195; these read FSTFLQNNGSNSDLPQM, ELNSSPMTHPHSFQQNFQTPT, and TKLNNNSNADLSSPTE. Over residues 196–212 the composition is skewed to low complexity; it reads SSFLKSNLNLPNSNIPP. Residues 315–634 enclose the Protein kinase domain; sequence FNTVKVIGKG…ADELKSHPFF (320 aa). Residues 321 to 329 and Lys344 each bind ATP; that span reads IGKGAFGEV. The active-site Proton acceptor is Asp438. The 80-residue stretch at 635–714 folds into the AGC-kinase C-terminal domain; sequence RGVDWDTIRK…SRFDYLTRKN (80 aa).

The protein belongs to the protein kinase superfamily. STE Ser/Thr protein kinase family. COT1 subfamily.

The enzyme catalyses L-seryl-[protein] + ATP = O-phospho-L-seryl-[protein] + ADP + H(+). It catalyses the reaction L-threonyl-[protein] + ATP = O-phospho-L-threonyl-[protein] + ADP + H(+). Protein kinase that seems to play a role in the regulation of cell morphogenesis and proliferation. In Debaryomyces hansenii (strain ATCC 36239 / CBS 767 / BCRC 21394 / JCM 1990 / NBRC 0083 / IGC 2968) (Yeast), this protein is Serine/threonine-protein kinase CBK1 (CBK1).